A 322-amino-acid chain; its full sequence is Crystallin J1B (322 aa).

It belongs to the ADP-ribosylglycohydrolase family. J1 crystallin subfamily. As to expression, expressed in the rhopalia. Present in both the large and small eyes.

This Tripedalia cystophora (Jellyfish) protein is Crystallin J1B.